Consider the following 257-residue polypeptide: Glutamate racemase (257 aa).

Substrate contacts are provided by residues 12–13 and 44–45; these read DS and YG. Cys75 serves as the catalytic Proton donor/acceptor. 76–77 contributes to the substrate binding site; it reads NT. Catalysis depends on Cys176, which acts as the Proton donor/acceptor. Substrate is bound at residue 177–178; the sequence is TH.

Belongs to the aspartate/glutamate racemases family.

It carries out the reaction L-glutamate = D-glutamate. The protein operates within cell wall biogenesis; peptidoglycan biosynthesis. In terms of biological role, provides the (R)-glutamate required for cell wall biosynthesis. In Thermus thermophilus (strain ATCC 27634 / DSM 579 / HB8), this protein is Glutamate racemase.